Reading from the N-terminus, the 218-residue chain is Serine/threonine-protein phosphatase 2 (218 aa).

Positions 22, 24, 51, and 77 each coordinate Mn(2+). The active-site Proton donor is H78. H187 is a binding site for Mn(2+).

It belongs to the PPP phosphatase family. PP-1 subfamily. Mn(2+) serves as cofactor.

The catalysed reaction is O-phospho-L-seryl-[protein] + H2O = L-seryl-[protein] + phosphate. The enzyme catalyses O-phospho-L-threonyl-[protein] + H2O = L-threonyl-[protein] + phosphate. With respect to regulation, inhibited by cadmium, copper, zinc when added activity but with less efficiency. Can hydrolyze phosphorylated Ser-, Thr- or Tyr-substrates in vitro. The natural substrate is unknown. This chain is Serine/threonine-protein phosphatase 2 (pphB), found in Salmonella typhimurium (strain LT2 / SGSC1412 / ATCC 700720).